Reading from the N-terminus, the 128-residue chain is Claw keratin (128 aa).

A run of 2 repeats spans residues G83 to Y91 and G92 to Y100. The segment at G83–G104 is 3 X 9 AA tandem repeats, Gly-rich. Residues G101–C109 form a 3; approximate repeat.

It belongs to the avian keratin family. In terms of tissue distribution, abundantly expressed in the claw and at a low level in feather tissue.

The chain is Claw keratin (CKER1) from Gallus gallus (Chicken).